Here is a 102-residue protein sequence, read N- to C-terminus: Vesicle-associated membrane protein 5 (102 aa).

Over 1 to 72 the chain is Cytoplasmic; sequence MAGKELERCQ…RWENIRCRVY (72 aa). The region spanning 5-65 is the v-SNARE coiled-coil homology domain; it reads ELERCQRQAD…KTLAQQKRWE (61 aa). Serine 41, serine 48, and serine 49 each carry phosphoserine. Residues 73 to 93 traverse the membrane as a helical; Anchor for type IV membrane protein segment; the sequence is LGLAVAGGLLLILVVLLVIFL. The Vesicular segment spans residues 94–102; the sequence is PSGEDSSKP.

It belongs to the synaptobrevin family.

It localises to the cell membrane. The protein localises to the endomembrane system. The protein resides in the golgi apparatus. Its subcellular location is the trans-Golgi network membrane. Functionally, may participate in trafficking events that are associated with myogenesis, such as myoblast fusion and/or GLUT4 trafficking. This is Vesicle-associated membrane protein 5 (Vamp5) from Rattus norvegicus (Rat).